Here is a 60-residue protein sequence, read N- to C-terminus: Arabinogalactan protein 12 (60 aa).

Residues 1–27 form the signal peptide; the sequence is MESMKMKLIVVLMVAIVAFSAVGNVAA. A Pyrrolidone carboxylic acid modification is found at Gln-28. 3 positions are modified to 4-hydroxyproline: Pro-32, Pro-34, and Pro-36. O-linked (Ara...) hydroxyproline glycans are attached at residues Pro-32, Pro-34, and Pro-36. A lipid anchor (GPI-anchor amidated serine) is attached at Ser-38. The propeptide at 39-60 is removed in mature form; sequence DAAMFVPALFASVAALASGFLF.

It belongs to the AG-peptide AGP family. Post-translationally, contains 4-hydroxyproline; hydroxylated on Pro-32, Pro-34 and Pro-36. In terms of processing, O-glycosylated on hydroxyprolines; noncontiguous hydroxylproline residues are glycosylated with arabinogalactan. Expressed in reproductive tissues. Expressed in chalaza, funiculus, stigma, septum, style and transmitting tract.

Its subcellular location is the cell membrane. In terms of biological role, proteoglycan that seems to be implicated in diverse developmental roles such as differentiation, cell-cell recognition, embryogenesis and programmed cell death. The polypeptide is Arabinogalactan protein 12 (Arabidopsis thaliana (Mouse-ear cress)).